The chain runs to 138 residues: Large ribosomal subunit protein uL16 (138 aa).

Basic residues predominate over residues 1–16 (MLIPRRVKHRKQHHPG). A disordered region spans residues 1-25 (MLIPRRVKHRKQHHPGRSGAATGGT).

It belongs to the universal ribosomal protein uL16 family. In terms of assembly, part of the 50S ribosomal subunit.

Functionally, binds 23S rRNA and is also seen to make contacts with the A and possibly P site tRNAs. The protein is Large ribosomal subunit protein uL16 of Pseudarthrobacter chlorophenolicus (strain ATCC 700700 / DSM 12829 / CIP 107037 / JCM 12360 / KCTC 9906 / NCIMB 13794 / A6) (Arthrobacter chlorophenolicus).